A 178-amino-acid polypeptide reads, in one-letter code: Endothelin-2 (178 aa).

The N-terminal stretch at 1 to 24 is a signal peptide; it reads MVAVPTAWCSVALALLLALQEGKG. A propeptide spanning residues 25 to 46 is cleaved from the precursor; it reads QVAAAPDHPAPSPRARGSHLRP. Intrachain disulfides connect Cys-49–Cys-63 and Cys-51–Cys-59. A propeptide spanning residues 70–178 is cleaved from the precursor; the sequence is VNTPGQTAPY…RPMYPRRRKT (109 aa). The tract at residues 96–111 is endothelin-like; it reads CECSSSGDPACATFCH. Residues 158-178 form a disordered region; sequence ARQHQEAEREPRPMYPRRRKT. Residues 160-169 are compositionally biased toward basic and acidic residues; sequence QHQEAEREPR.

It belongs to the endothelin/sarafotoxin family.

The protein resides in the secreted. Its function is as follows. Endothelins are endothelium-derived vasoconstrictor peptides. In Mustela putorius furo (European domestic ferret), this protein is Endothelin-2 (EDN2).